The sequence spans 675 residues: NADH-quinone oxidoreductase subunit G (675 aa).

The 78-residue stretch at 1 to 78 (MIKLIIDGSE…GMVIHTDTSM (78 aa)) folds into the 2Fe-2S ferredoxin-type domain. 4 residues coordinate [2Fe-2S] cluster: Cys34, Cys45, Cys48, and Cys62. The 40-residue stretch at 78–117 (MVKKAREGVMEFLLINHPLDCPICDQGGECDLQDQAFRYG) folds into the 4Fe-4S His(Cys)3-ligated-type domain. Residues His94, Cys98, Cys101, Cys107, Cys146, Cys149, Cys152, and Cys196 each coordinate [4Fe-4S] cluster. The region spanning 215 to 271 (LKHTASIGVHDAEGSNIRIDSRADEIMRILPSVNEAINEAWISDKNRFCYDGLKYQR) is the 4Fe-4S Mo/W bis-MGD-type domain.

The protein belongs to the complex I 75 kDa subunit family. The cofactor is [2Fe-2S] cluster. [4Fe-4S] cluster serves as cofactor.

The catalysed reaction is a quinone + NADH + 5 H(+)(in) = a quinol + NAD(+) + 4 H(+)(out). Functionally, NDH-1 shuttles electrons from NADH, via FMN and iron-sulfur (Fe-S) centers, to quinones in the respiratory chain. Couples the redox reaction to proton translocation (for every two electrons transferred, four hydrogen ions are translocated across the cytoplasmic membrane), and thus conserves the redox energy in a proton gradient. This Rickettsia typhi (strain ATCC VR-144 / Wilmington) protein is NADH-quinone oxidoreductase subunit G (nuoG).